We begin with the raw amino-acid sequence, 405 residues long: Diaminopimelate decarboxylase (405 aa).

Lysine 46 carries the post-translational modification N6-(pyridoxal phosphate)lysine. Residues glycine 225 and 259-262 (EPGR) each bind pyridoxal 5'-phosphate. Residues arginine 262, arginine 298, and tyrosine 302 each coordinate substrate. Cysteine 329 functions as the Proton donor in the catalytic mechanism. Residues glutamate 330 and tyrosine 358 each contribute to the substrate site. Tyrosine 358 is a pyridoxal 5'-phosphate binding site.

The protein belongs to the Orn/Lys/Arg decarboxylase class-II family. LysA subfamily. Homodimer. It depends on pyridoxal 5'-phosphate as a cofactor.

It carries out the reaction meso-2,6-diaminopimelate + H(+) = L-lysine + CO2. Its pathway is amino-acid biosynthesis; L-lysine biosynthesis via DAP pathway; L-lysine from DL-2,6-diaminopimelate: step 1/1. Specifically catalyzes the decarboxylation of meso-diaminopimelate (meso-DAP) to L-lysine. This chain is Diaminopimelate decarboxylase, found in Helicobacter pylori (strain ATCC 700392 / 26695) (Campylobacter pylori).